The chain runs to 537 residues: Phosphoenolpyruvate carboxykinase (ATP) (537 aa).

3 residues coordinate substrate: arginine 64, tyrosine 204, and lysine 210. ATP-binding positions include lysine 210, histidine 229, and 245 to 253 (GLSGTGKTT). 2 residues coordinate Mn(2+): lysine 210 and histidine 229. Position 266 (aspartate 266) interacts with Mn(2+). ATP is bound by residues glutamate 294, arginine 330, 446 to 447 (RI), and threonine 452. Arginine 330 provides a ligand contact to substrate.

It belongs to the phosphoenolpyruvate carboxykinase (ATP) family. Monomer. It depends on Mn(2+) as a cofactor.

It is found in the cytoplasm. It carries out the reaction oxaloacetate + ATP = phosphoenolpyruvate + ADP + CO2. It functions in the pathway carbohydrate biosynthesis; gluconeogenesis. Involved in the gluconeogenesis. Catalyzes the conversion of oxaloacetate (OAA) to phosphoenolpyruvate (PEP) through direct phosphoryl transfer between the nucleoside triphosphate and OAA. The protein is Phosphoenolpyruvate carboxykinase (ATP) of Aliivibrio fischeri (strain ATCC 700601 / ES114) (Vibrio fischeri).